The primary structure comprises 739 residues: Phosphoribosylformylglycinamidine synthase subunit PurL (739 aa).

Residue histidine 53 is part of the active site. ATP is bound by residues tyrosine 56 and lysine 95. Glutamate 97 lines the Mg(2+) pocket. Substrate-binding positions include 98–101 (SHNH) and arginine 120. The active-site Proton acceptor is histidine 99. Residue aspartate 121 participates in Mg(2+) binding. Glutamine 244 is a binding site for substrate. Aspartate 274 lines the Mg(2+) pocket. 318–320 (ESQ) contributes to the substrate binding site. Positions 501 and 538 each coordinate ATP. Asparagine 539 serves as a coordination point for Mg(2+). Residue serine 541 participates in substrate binding.

It belongs to the FGAMS family. As to quaternary structure, monomer. Part of the FGAM synthase complex composed of 1 PurL, 1 PurQ and 2 PurS subunits.

The protein resides in the cytoplasm. It carries out the reaction N(2)-formyl-N(1)-(5-phospho-beta-D-ribosyl)glycinamide + L-glutamine + ATP + H2O = 2-formamido-N(1)-(5-O-phospho-beta-D-ribosyl)acetamidine + L-glutamate + ADP + phosphate + H(+). It functions in the pathway purine metabolism; IMP biosynthesis via de novo pathway; 5-amino-1-(5-phospho-D-ribosyl)imidazole from N(2)-formyl-N(1)-(5-phospho-D-ribosyl)glycinamide: step 1/2. Its function is as follows. Part of the phosphoribosylformylglycinamidine synthase complex involved in the purines biosynthetic pathway. Catalyzes the ATP-dependent conversion of formylglycinamide ribonucleotide (FGAR) and glutamine to yield formylglycinamidine ribonucleotide (FGAM) and glutamate. The FGAM synthase complex is composed of three subunits. PurQ produces an ammonia molecule by converting glutamine to glutamate. PurL transfers the ammonia molecule to FGAR to form FGAM in an ATP-dependent manner. PurS interacts with PurQ and PurL and is thought to assist in the transfer of the ammonia molecule from PurQ to PurL. The polypeptide is Phosphoribosylformylglycinamidine synthase subunit PurL (Listeria innocua serovar 6a (strain ATCC BAA-680 / CLIP 11262)).